The chain runs to 402 residues: Multidrug resistance protein MdtH (402 aa).

The Cytoplasmic portion of the chain corresponds to 1–12 (MSRVSQARNLGK). A helical membrane pass occupies residues 13–33 (YFLLIDNMLVVLGFFVVFPLI). Topologically, residues 34–98 (SIRFVDQMGW…GFATMGIAHE (65 aa)) are periplasmic. A helical membrane pass occupies residues 99 to 116 (PWLLWFSCFLSGLGGTLF). The Cytoplasmic segment spans residues 117-138 (DPPRSALVVKLIRPEQRGRFFS). Residues 139 to 159 (LLMMQDSAGAVIGALLGSWLL) traverse the membrane as a helical segment. At 160–164 (QYDFR) the chain is on the periplasmic side. A helical transmembrane segment spans residues 165 to 185 (LVCATGAILFILCALFNAWLL). At 186 to 213 (PAWKLSTVRTPVREGMRRVMSDKRFVTY) the chain is on the cytoplasmic side. Residues 214-234 (VLTLAGYYMLAVQVMLMLPIM) form a helical membrane-spanning segment. Residues 235 to 243 (VNDIAGSPA) lie on the Periplasmic side of the membrane. Residues 244–264 (AVKWMYAIEACLSLTLLYPIA) form a helical membrane-spanning segment. Topologically, residues 265-276 (RWSEKRFRLEHR) are cytoplasmic. A helical membrane pass occupies residues 277–297 (LMAGLLVMSLSMLPIGMVGNL). The Periplasmic portion of the chain corresponds to 298 to 299 (QQ). The helical transmembrane segment at 300-320 (LFTLICAFYIGSVIAEPARET) threads the bilayer. Over 321 to 339 (LSASLADARARGSYMGFSR) the chain is Cytoplasmic. The helical transmembrane segment at 340–360 (LGLAIGGAIGYIGGGWLFDMG) threads the bilayer. The Periplasmic portion of the chain corresponds to 361–367 (KALAQPE). Residues 368–388 (LPWMMLGIIGFITFLALGWQF) form a helical membrane-spanning segment. Residues 389 to 402 (SHKRTPRRMLEPGA) are Cytoplasmic-facing.

The protein belongs to the major facilitator superfamily. DHA1 family. MdtH (TC 2.A.1.2.21) subfamily.

It localises to the cell inner membrane. The polypeptide is Multidrug resistance protein MdtH (Salmonella agona (strain SL483)).